The sequence spans 256 residues: MKEILITNDDGFEAKGLHELADALRQIPDVNVTIVAPSSEKSACAHSLTLTKPLRFIKIDDNFFKLDDATPSDCVYLALHALYQKKPDLVISGINHGANLGEDITYSGTCGAAMEGVLQGIKSIAFSQFYKNNSIEELGFSLACQIVKFIVPRVLEGEICLPQRQFLNVNIPAVAARDFKGYKVAPAGRRCYATHATLNRNPRGVEYYWLGNAALDYEEGQISDISVINDGFASLTPIQLDMTAHASLENLKKSFQ.

A divalent metal cation is bound by residues Asp9, Asp10, Ser42, and Asn95.

This sequence belongs to the SurE nucleotidase family. A divalent metal cation is required as a cofactor.

It is found in the cytoplasm. The catalysed reaction is a ribonucleoside 5'-phosphate + H2O = a ribonucleoside + phosphate. Functionally, nucleotidase that shows phosphatase activity on nucleoside 5'-monophosphates. In Campylobacter curvus (strain 525.92), this protein is 5'-nucleotidase SurE.